The primary structure comprises 558 residues: Mitochondrial nucleoid-associated protein 1 (558 aa).

Over 1–527 the chain is Extracellular; the sequence is MGAAEPRMEV…VQCNTTIKKS (527 aa). Disordered regions lie at residues 29 to 88, 130 to 205, and 222 to 269; these read KMRG…SWTA, LQRV…KLGT, and LSDR…KTQK. Polar residues predominate over residues 36–45; that stretch reads SADQNVSQSK. Basic and acidic residues predominate over residues 51-81; sequence QKEKSPTRDLTRAKEKELEVDRPKRAVKAET. Polar residues-rich tracts occupy residues 131–144 and 187–197; these read QRVT…SDAT and SSTQPHANPAT. A helical transmembrane segment spans residues 528 to 548; sequence GVGGLTMLFAGYFILCCNWSF. Over 549–558 the chain is Cytoplasmic; the sequence is KHLKLQHWRK.

It is found in the mitochondrion inner membrane. The protein resides in the mitochondrion matrix. It localises to the mitochondrion nucleoid. In terms of biological role, critical regulator of mitochondrial DNA (mtDNA) abundance. Binds dsDNA throughout the mitochondrial genome without sequence specificity and controls mtDNA copy number by promoting its replication. Also plays important roles in mitochondrial metabolism and cell proliferation. The sequence is that of Mitochondrial nucleoid-associated protein 1 from Mus musculus (Mouse).